A 256-amino-acid polypeptide reads, in one-letter code: Small ribosomal subunit protein uS2 (256 aa).

The protein belongs to the universal ribosomal protein uS2 family.

The sequence is that of Small ribosomal subunit protein uS2 from Brucella anthropi (strain ATCC 49188 / DSM 6882 / CCUG 24695 / JCM 21032 / LMG 3331 / NBRC 15819 / NCTC 12168 / Alc 37) (Ochrobactrum anthropi).